Here is a 320-residue protein sequence, read N- to C-terminus: o-succinylbenzoate synthase (320 aa).

Lys133 (proton donor) is an active-site residue. Mg(2+) contacts are provided by Asp161, Glu190, and Asp213. The active-site Proton acceptor is the Lys235.

It belongs to the mandelate racemase/muconate lactonizing enzyme family. MenC type 1 subfamily. A divalent metal cation is required as a cofactor.

The enzyme catalyses (1R,6R)-6-hydroxy-2-succinyl-cyclohexa-2,4-diene-1-carboxylate = 2-succinylbenzoate + H2O. Its pathway is quinol/quinone metabolism; 1,4-dihydroxy-2-naphthoate biosynthesis; 1,4-dihydroxy-2-naphthoate from chorismate: step 4/7. It functions in the pathway quinol/quinone metabolism; menaquinone biosynthesis. Converts 2-succinyl-6-hydroxy-2,4-cyclohexadiene-1-carboxylate (SHCHC) to 2-succinylbenzoate (OSB). This Escherichia coli (strain SMS-3-5 / SECEC) protein is o-succinylbenzoate synthase.